The following is a 375-amino-acid chain: Glutamate 5-kinase (375 aa).

Residue Lys17 coordinates ATP. Substrate is bound by residues Ser57, Asp144, and Asn156. 176 to 177 (TD) lines the ATP pocket. The 79-residue stretch at 283-361 (KGRLWLDTGA…HQIEQILGYV (79 aa)) folds into the PUA domain.

The protein belongs to the glutamate 5-kinase family.

The protein resides in the cytoplasm. The enzyme catalyses L-glutamate + ATP = L-glutamyl 5-phosphate + ADP. Its pathway is amino-acid biosynthesis; L-proline biosynthesis; L-glutamate 5-semialdehyde from L-glutamate: step 1/2. In terms of biological role, catalyzes the transfer of a phosphate group to glutamate to form L-glutamate 5-phosphate. This Nitrosococcus oceani (strain ATCC 19707 / BCRC 17464 / JCM 30415 / NCIMB 11848 / C-107) protein is Glutamate 5-kinase.